Reading from the N-terminus, the 292-residue chain is 2-(5''-triphosphoribosyl)-3'-dephosphocoenzyme-A synthase (292 aa).

This sequence belongs to the CitG/MdcB family.

The enzyme catalyses 3'-dephospho-CoA + ATP = 2'-(5''-triphospho-alpha-D-ribosyl)-3'-dephospho-CoA + adenine. Functionally, catalyzes the formation of 2-(5''-triphosphoribosyl)-3'-dephosphocoenzyme-A, the precursor of the prosthetic group of the holo-acyl carrier protein (gamma chain) of citrate lyase, from ATP and dephospho-CoA. The sequence is that of 2-(5''-triphosphoribosyl)-3'-dephosphocoenzyme-A synthase from Escherichia coli O139:H28 (strain E24377A / ETEC).